Here is a 257-residue protein sequence, read N- to C-terminus: Protein MoaE (257 aa).

Residue 6–29 participates in NAD(+) binding; sequence VITGGGTGIGAACARLMHPAGERV. The segment at 75–96 is disordered; that stretch reads LMSSSAAPAGWATAPPPRPATA. A substrate-binding site is contributed by Ser132. Tyr145 functions as the Proton acceptor in the catalytic mechanism.

This sequence belongs to the short-chain dehydrogenases/reductases (SDR) family.

Its function is as follows. Might catalyze the conversion of monoamine compounds or their metabolites. This is Protein MoaE (moaE) from Klebsiella aerogenes (Enterobacter aerogenes).